Reading from the N-terminus, the 623-residue chain is Glutathione import ATP-binding protein GsiA (623 aa).

2 consecutive ABC transporter domains span residues 15–269 (VENL…RALL) and 314–564 (LRVR…RKLL). ATP contacts are provided by residues 49–56 (GESGSGKS) and 357–364 (GESGSGKS).

Belongs to the ABC transporter superfamily. Glutathione importer (TC 3.A.1.5.11) family. In terms of assembly, the complex is composed of two ATP-binding proteins (GsiA), two transmembrane proteins (GsiC and GsiD) and a solute-binding protein (GsiB).

It localises to the cell inner membrane. It carries out the reaction glutathione(out) + ATP + H2O = glutathione(in) + ADP + phosphate + H(+). Its function is as follows. Part of the ABC transporter complex GsiABCD involved in glutathione import. Responsible for energy coupling to the transport system. The chain is Glutathione import ATP-binding protein GsiA from Shigella flexneri.